A 181-amino-acid polypeptide reads, in one-letter code: ECF RNA polymerase sigma factor RpoE (181 aa).

A sigma-70 factor domain-2 region spans residues 29 to 96 (LFQHFAPKVK…RRIDGLRKDR (68 aa)). Positions 53 to 56 (ECAQ) match the Interaction with polymerase core subunit RpoC motif. A sigma-70 factor domain-4 region spans residues 129–178 (AIARLPEAQRALIERAFFGDLTHRELAAETGLPLGTIKSRIRLALDRLRQ). Residues 151–170 (HRELAAETGLPLGTIKSRIR) constitute a DNA-binding region (H-T-H motif).

This sequence belongs to the sigma-70 factor family. ECF subfamily. Interacts transiently with the RNA polymerase catalytic core formed by RpoA, RpoB, RpoC and RpoZ (2 alpha, 1 beta, 1 beta' and 1 omega subunit) to form the RNA polymerase holoenzyme that can initiate transcription. Forms a 1:1 complex (via sigma-70 factor domain 4) with anti-sigma factor ChrR; this inhibits the interaction of RpoE with the RNA polymerase catalytic core.

Its function is as follows. Sigma factors are initiation factors that promote the attachment of RNA polymerase to specific initiation sites and are then released. Extracytoplasmic function (ECF) sigma factors are held in an inactive form by a cognate anti-sigma factor until released. Sigma-E controls a transcriptional response to singlet oxygen, a by-product of photosynthesis; its continuous activity requires constant exposure to singlet oxygen. The regulon has about 180 genes that protect against or repair damage induced by singlet oxygen, including itself and rpoH2, a heat shock-responsive sigma factor. The chain is ECF RNA polymerase sigma factor RpoE (rpoE) from Cereibacter sphaeroides (strain ATCC 17023 / DSM 158 / JCM 6121 / CCUG 31486 / LMG 2827 / NBRC 12203 / NCIMB 8253 / ATH 2.4.1.) (Rhodobacter sphaeroides).